The following is a 202-amino-acid chain: Small heat shock protein hspG5 (202 aa).

One can recognise a sHSP domain in the interval 31 to 202 (KTIIDIIPPM…YSNTIKININ (172 aa)). The segment at 96 to 138 (TSSTTLDSKEDEASIEEFEDDIKPKSKSTVTTTATKENKEDEN) is disordered.

The protein belongs to the small heat shock protein (HSP20) family.

This Dictyostelium discoideum (Social amoeba) protein is Small heat shock protein hspG5 (hspG5).